A 1384-amino-acid chain; its full sequence is CHD3-type chromatin-remodeling factor PICKLE (1384 aa).

S23 is modified (phosphoserine). A PHD-type zinc finger spans residues 49–96 (ENACQACGESTNLVSCNTCTYAFHAKCLVPPLKDASVENWRCPECVSP). Chromo domains are found at residues 98–180 (NEID…NSED) and 190–249 (TTVD…RSKD). The Helicase ATP-binding domain maps to 285-471 (RFSWSKQTHV…FMLMHFLDAG (187 aa)). 298-305 (DEMGLGKT) provides a ligand contact to ATP. Positions 376–383 (KKKKSGQI) match the Nuclear localization signal motif. Positions 422 to 425 (DEGH) match the DEAH box motif. The Helicase C-terminal domain occupies 599-760 (LLDKMMVKLK…NINQEELDDI (162 aa)). The segment covering 893–912 (AGLEDVSSDGDESYEAESTD) has biased composition (acidic residues). 4 disordered regions span residues 893–941 (AGLE…TPLM), 1122–1152 (GLQGQNGSGGSNPGAQTNQNPGSVITGNNNA), 1313–1344 (SDQSKSHEDDTKPDLNNVEMKDTAEETKPLRG), and 1365–1384 (VDVKMEEAKEEEKPKNMVVD). The segment covering 1138 to 1152 (TNQNPGSVITGNNNA) has biased composition (polar residues). Basic and acidic residues-rich tracts occupy residues 1316-1341 (SKSHEDDTKPDLNNVEMKDTAEETKP) and 1367-1384 (VKMEEAKEEEKPKNMVVD).

It belongs to the SNF2/RAD54 helicase family. As to quaternary structure, interacts with TAF12B. Mostly expressed in tissue undergoing significant differentiation (meristems and primordia) such as young seedlings, influorescent tissue and young siliques, but not in endosperm and seed coat (at protein level). Levels decrease as organs age. Also present in trichomes.

It localises to the nucleus. In terms of biological role, chromatin remodeling factor that represses the expression of embryonic trait genes (such as NFYB9/LEC1) upon and after seed germination and thus enables the developmental switch to post-germinative growth. Silences some MADS-box proteins such as PHE1 and PHE2. Plays a role during carpel differentiation. Regulates late processes in cytokinin signaling. In Arabidopsis thaliana (Mouse-ear cress), this protein is CHD3-type chromatin-remodeling factor PICKLE (PKL).